Reading from the N-terminus, the 894-residue chain is Desmocollin-1 (894 aa).

A signal peptide spans 1–29 (MALASAAPGSIFCKQLLFSLLVLTLLCDA). A propeptide spanning residues 30–134 (CQKVYLRVPS…KDTALKRSKR (105 aa)) is cleaved from the precursor. 5 consecutive Cadherin domains span residues 135-242 (RWAP…APYF), 243-354 (EHRV…PPSF), 355-471 (TETS…GPEC), 472-575 (HPPV…DHAP), and 576-682 (QIDK…STRD). Over 135 to 691 (RWAPIPASLM…DVRPNVILGR (557 aa)) the chain is Extracellular. N-linked (GlcNAc...) asparagine glycosylation is present at Asn-165. At Thr-385 the chain carries Phosphothreonine. N-linked (GlcNAc...) asparagine glycosylation occurs at Asn-546. The helical transmembrane segment at 692–714 (WAILAMVLGSVLLLCILFTCFCV) threads the bilayer. The Cytoplasmic segment spans residues 715–894 (TAKRTVKKCF…RTLAKTCIKK (180 aa)).

In terms of assembly, binds to JUP/plakoglobin. In terms of tissue distribution, strongly expressed in epidermis, less in lymph node and tongue.

It localises to the cell membrane. The protein localises to the cell junction. It is found in the desmosome. A component of desmosome cell-cell junctions which are required for positive regulation of cellular adhesion. Required for desmosome adhesion strength between the granular layers of the epidermis, as a result moderates epidermal proliferation and differentiation. Is therefore required to maintain postnatal epidermal barrier function and normal hair follicle morphology into adulthood. This Homo sapiens (Human) protein is Desmocollin-1 (DSC1).